The primary structure comprises 415 residues: Squalene synthase 10 (415 aa).

Helical transmembrane passes span 281-301 and 392-412; these read AIFR…ALCF and LIVI…SNLP.

It belongs to the phytoene/squalene synthase family. Mg(2+) serves as cofactor. Requires Mn(2+) as cofactor.

It localises to the endoplasmic reticulum membrane. It catalyses the reaction 2 (2E,6E)-farnesyl diphosphate + NADH + H(+) = squalene + 2 diphosphate + NAD(+). It carries out the reaction 2 (2E,6E)-farnesyl diphosphate + NADPH + H(+) = squalene + 2 diphosphate + NADP(+). It functions in the pathway terpene metabolism; lanosterol biosynthesis; lanosterol from farnesyl diphosphate: step 1/3. Functionally, component of the triterpene saponins (e.g. ginsenosides or panaxosides) and phytosterols biosynthetic pathways. Catalyzes the biosynthesis of squalene. The chain is Squalene synthase 10 from Panax ginseng (Korean ginseng).